The primary structure comprises 287 residues: Ret finger protein-like 4A-like protein 1 (287 aa).

The segment at cysteine 11–serine 53 adopts an RING-type; degenerate zinc-finger fold. One can recognise a B30.2/SPRY domain in the interval glutamate 78–serine 276.

This Homo sapiens (Human) protein is Ret finger protein-like 4A-like protein 1 (RFPL4AL1).